Consider the following 190-residue polypeptide: Elongation factor P 2 (190 aa).

The protein belongs to the elongation factor P family.

The protein localises to the cytoplasm. It participates in protein biosynthesis; polypeptide chain elongation. In terms of biological role, involved in peptide bond synthesis. Stimulates efficient translation and peptide-bond synthesis on native or reconstituted 70S ribosomes in vitro. Probably functions indirectly by altering the affinity of the ribosome for aminoacyl-tRNA, thus increasing their reactivity as acceptors for peptidyl transferase. The polypeptide is Elongation factor P 2 (efp2) (Chlamydia caviae (strain ATCC VR-813 / DSM 19441 / 03DC25 / GPIC) (Chlamydophila caviae)).